A 186-amino-acid chain; its full sequence is MGRYSRESDNVTKSCKARGPNLRVHFKNTHETAQAIKRMPLRRAQRFLKAVIDQKECVPFRRFNGGVGRCAQAKQWKTTQGRWPKKSAEFLLQLLRNAEANADCKGLDADRMVVHHIQVNRAQCLRRRTYRAHGRINPYMSSPCHVEVILTEKEEVVSKAVDDEPAKKKLSKKKLQRQKEKMLRSE.

Positions V161–E186 are disordered. Basic and acidic residues predominate over residues R177 to E186.

The protein belongs to the universal ribosomal protein uL22 family.

This Drosophila pseudoobscura pseudoobscura (Fruit fly) protein is Large ribosomal subunit protein uL22 (RpL17).